Consider the following 313-residue polypeptide: Porphobilinogen deaminase (313 aa).

Cysteine 242 is modified (S-(dipyrrolylmethanemethyl)cysteine).

It belongs to the HMBS family. As to quaternary structure, monomer. It depends on dipyrromethane as a cofactor.

The enzyme catalyses 4 porphobilinogen + H2O = hydroxymethylbilane + 4 NH4(+). It functions in the pathway porphyrin-containing compound metabolism; protoporphyrin-IX biosynthesis; coproporphyrinogen-III from 5-aminolevulinate: step 2/4. In terms of biological role, tetrapolymerization of the monopyrrole PBG into the hydroxymethylbilane pre-uroporphyrinogen in several discrete steps. The sequence is that of Porphobilinogen deaminase from Escherichia coli O6:H1 (strain CFT073 / ATCC 700928 / UPEC).